Here is a 291-residue protein sequence, read N- to C-terminus: Homoserine kinase (291 aa).

80 to 90 provides a ligand contact to ATP; the sequence is RPASGLGSSAA.

The protein belongs to the GHMP kinase family. Homoserine kinase subfamily.

It localises to the cytoplasm. The enzyme catalyses L-homoserine + ATP = O-phospho-L-homoserine + ADP + H(+). It functions in the pathway amino-acid biosynthesis; L-threonine biosynthesis; L-threonine from L-aspartate: step 4/5. Functionally, catalyzes the ATP-dependent phosphorylation of L-homoserine to L-homoserine phosphate. This chain is Homoserine kinase, found in Haloarcula marismortui (strain ATCC 43049 / DSM 3752 / JCM 8966 / VKM B-1809) (Halobacterium marismortui).